The following is a 483-amino-acid chain: Regulatory protein ViaA (483 aa).

The protein belongs to the ViaA family. As to quaternary structure, homodimer. Interacts with RavA.

It localises to the cytoplasm. Its function is as follows. Component of the RavA-ViaA chaperone complex, which may act on the membrane to optimize the function of some of the respiratory chains. ViaA stimulates the ATPase activity of RavA. This is Regulatory protein ViaA from Salmonella arizonae (strain ATCC BAA-731 / CDC346-86 / RSK2980).